The sequence spans 185 residues: Ribosome-recycling factor (185 aa).

The protein belongs to the RRF family.

The protein resides in the cytoplasm. Functionally, responsible for the release of ribosomes from messenger RNA at the termination of protein biosynthesis. May increase the efficiency of translation by recycling ribosomes from one round of translation to another. The protein is Ribosome-recycling factor of Aromatoleum aromaticum (strain DSM 19018 / LMG 30748 / EbN1) (Azoarcus sp. (strain EbN1)).